A 108-amino-acid chain; its full sequence is UPF0145 protein SYNPCC7002_A1337 (108 aa).

This sequence belongs to the UPF0145 family.

The polypeptide is UPF0145 protein SYNPCC7002_A1337 (Picosynechococcus sp. (strain ATCC 27264 / PCC 7002 / PR-6) (Agmenellum quadruplicatum)).